The sequence spans 204 residues: Isochorismatase domain-containing protein 2 (204 aa).

It belongs to the isochorismatase family. As to quaternary structure, interacts with CDKN2A.

It localises to the cytoplasm. It is found in the nucleus. This Bos taurus (Bovine) protein is Isochorismatase domain-containing protein 2 (ISOC2).